Consider the following 226-residue polypeptide: Sugar fermentation stimulation protein homolog (226 aa).

It belongs to the SfsA family.

This Picrophilus torridus (strain ATCC 700027 / DSM 9790 / JCM 10055 / NBRC 100828 / KAW 2/3) protein is Sugar fermentation stimulation protein homolog.